The chain runs to 295 residues: Ethanolamine ammonia-lyase small subunit (295 aa).

Adenosylcob(III)alamin-binding residues include Val-207, Glu-228, and Cys-258.

It belongs to the EutC family. In terms of assembly, the basic unit is a heterodimer which dimerizes to form tetramers. The heterotetramers trimerize; 6 large subunits form a core ring with 6 small subunits projecting outwards. The cofactor is adenosylcob(III)alamin.

The protein resides in the bacterial microcompartment. The enzyme catalyses ethanolamine = acetaldehyde + NH4(+). It functions in the pathway amine and polyamine degradation; ethanolamine degradation. Its function is as follows. Catalyzes the deamination of various vicinal amino-alcohols to oxo compounds. Allows this organism to utilize ethanolamine as the sole source of nitrogen and carbon in the presence of external vitamin B12. The protein is Ethanolamine ammonia-lyase small subunit of Shigella sonnei (strain Ss046).